A 239-amino-acid chain; its full sequence is Cell number regulator 6 (239 aa).

The segment covering 1–10 (MAEDATSSHP) has biased composition (polar residues). Residues 1 to 33 (MAEDATSSHPSRYVKLTKDQDAPAEDIRPGELN) are disordered. Over residues 16–29 (LTKDQDAPAEDIRP) the composition is skewed to basic and acidic residues. Transmembrane regions (helical) follow at residues 107-127 (CVCH…TAIF) and 136-156 (FLIG…TGIF).

It belongs to the cornifelin family. Expressed in roots, leaves, stalks, apical meristems, immature ears, endosperm, pericarp and tassel spikelets.

The protein localises to the membrane. The polypeptide is Cell number regulator 6 (CNR6) (Zea mays (Maize)).